Reading from the N-terminus, the 320-residue chain is MQTLSQSLKQSAISEELASLLTVLANSSKDISQAVRRGALAGVLGVAGTENVQGEDQKKLDVITNDMLKDALAAQGSVKALASEEEDEIVPLAQDGQFLVCFDPLDGSSNIDINSLVGTIFSVLPAPSGDVSEQSFLQPGRKQLAAGYVLYGPSTMLALTTGQGVQLFTLDPVSGDYLLTVDGVQISKDTGEFAINMSNQRFWEPGMQAYIADLIQGKEGPRGKNFNMRWIAAMVGDVHRVLCRGGLFTYPTDTKDPKKPFKLRLMYEANPMAFLVEQAGGKASTGYETILDIAPSEIHQRVAVILGSANEVDACLGYHN.

E84, D103, L105, and D106 together coordinate Mg(2+). Substrate is bound by residues 106–109, N196, and K262; that span reads DGSS. E268 contributes to the Mg(2+) binding site.

This sequence belongs to the FBPase class 1 family. As to quaternary structure, homotetramer. Mg(2+) is required as a cofactor.

Its subcellular location is the cytoplasm. The enzyme catalyses beta-D-fructose 1,6-bisphosphate + H2O = beta-D-fructose 6-phosphate + phosphate. It participates in carbohydrate biosynthesis; gluconeogenesis. The protein is Fructose-1,6-bisphosphatase class 1 of Shewanella amazonensis (strain ATCC BAA-1098 / SB2B).